Here is a 286-residue protein sequence, read N- to C-terminus: Gap junction alpha-6 protein (286 aa).

Topologically, residues 1-23 (MSDWSALHQLLEKVQPYSTAGGK) are cytoplasmic. A helical transmembrane segment spans residues 24 to 41 (VWIKVLFIFRILLLGTAI). Residues 42–76 (ESAWSDEQFEFHCNTQQPGCENVCYDQAFPISHVR) are Extracellular-facing. Residues 77–99 (LWVLQVIFVSVPTLLHLAHVYYV) traverse the membrane as a helical segment. Residues 100–151 (IRQNEKLKKQEEEELKVAHFNGASGERRLQKHTGKHIKCGSKEHGNRKMRGR) lie on the Cytoplasmic side of the membrane. Residues 152–174 (LLLTYMASIFFKSVFEVAFLLIQ) traverse the membrane as a helical segment. Over 175-209 (WYLYGFTLSAVYICEQSPCPHRVDCFLSRPTEKTI) the chain is Extracellular. The chain crosses the membrane as a helical span at residues 210-232 (FILFMLVVSMVSFVLNVIELFYV). Residues 233-286 (LFKAIKNHLGNEKEEVYCNPVELQKPSCVSSSAVLTTICSSDQVVPVGLSSFYM) are Cytoplasmic-facing.

This sequence belongs to the connexin family. Alpha-type (group II) subfamily. As to quaternary structure, a connexon is composed of a hexamer of connexins. As to expression, expressed in testis.

It localises to the cell membrane. The protein localises to the cell junction. The protein resides in the gap junction. In terms of biological role, one gap junction consists of a cluster of closely packed pairs of transmembrane channels, the connexons, through which materials of low MW diffuse from one cell to a neighboring cell. The sequence is that of Gap junction alpha-6 protein (Gja6) from Rattus norvegicus (Rat).